The primary structure comprises 152 residues: Ribosome maturation factor RimP (152 aa).

It belongs to the RimP family.

The protein resides in the cytoplasm. Functionally, required for maturation of 30S ribosomal subunits. In Desulfitobacterium hafniense (strain DSM 10664 / DCB-2), this protein is Ribosome maturation factor RimP.